The primary structure comprises 393 residues: Beta-1,4-galactosyltransferase 3 (393 aa).

The Cytoplasmic portion of the chain corresponds to 1-10; that stretch reads MLRRLLERPC. The helical; Signal-anchor for type II membrane protein transmembrane segment at 11-31 threads the bilayer; it reads TLALLVGSQLAVMMYLSLGGF. At 32–393 the chain is on the lumenal side; the sequence is RSLSALFGRD…ANHTALRGSH (362 aa). Asn57 carries N-linked (GlcNAc...) asparagine glycosylation. Residues Cys77 and Cys119 are joined by a disulfide bond. A UDP-alpha-D-galactose-binding site is contributed by 130–134; that stretch reads PHRAR. A glycan (N-linked (GlcNAc...) asparagine) is linked at Asn166. UDP-alpha-D-galactose-binding positions include 169–171, 196–197, Tyr226, and Trp258; these read FNR and VD. Cys190 and Cys209 are disulfide-bonded. Asp197 provides a ligand contact to Mn(2+). 260 to 263 provides a ligand contact to N-acetyl-D-glucosamine; that stretch reads GEDD. His291 is a binding site for Mn(2+). Position 291–293 (291–293) interacts with UDP-alpha-D-galactose; sequence HRG. Arg303 contacts N-acetyl-D-glucosamine. Residues Asn337 and Asn385 are each glycosylated (N-linked (GlcNAc...) asparagine). A disordered region spans residues 339-393; it reads TADIGTDPRGPRAPSGPRYPPGSSQAFRQEMLQRRPPARPGPPPTANHTALRGSH.

This sequence belongs to the glycosyltransferase 7 family. Mn(2+) is required as a cofactor.

The protein localises to the golgi apparatus. It localises to the golgi stack membrane. It carries out the reaction an N-acetyl-beta-D-glucosaminyl derivative + UDP-alpha-D-galactose = a beta-D-galactosyl-(1-&gt;4)-N-acetyl-beta-D-glucosaminyl derivative + UDP + H(+). The enzyme catalyses N-acetyl-D-glucosamine + UDP-alpha-D-galactose = beta-D-galactosyl-(1-&gt;4)-N-acetyl-D-glucosamine + UDP + H(+). The catalysed reaction is a beta-D-GlcNAc-(1-&gt;3)-beta-D-Gal-(1-&gt;4)-beta-D-Glc-(1&lt;-&gt;1)-Cer(d18:1(4E)) + UDP-alpha-D-galactose = a neolactoside nLc4Cer(d18:1(4E)) + UDP + H(+). It catalyses the reaction a beta-D-glucosylceramide + UDP-alpha-D-galactose = a beta-D-galactosyl-(1-&gt;4)-beta-D-glucosyl-(1&lt;-&gt;1)-ceramide + UDP + H(+). It carries out the reaction a neolactoside IV(3)-beta-GlcNAc-nLc4Cer + UDP-alpha-D-galactose = a neolactoside nLc6Cer + UDP + H(+). Its pathway is protein modification; protein glycosylation. Its function is as follows. Responsible for the synthesis of complex-type N-linked oligosaccharides in many glycoproteins as well as the carbohydrate moieties of glycolipids. The polypeptide is Beta-1,4-galactosyltransferase 3 (B4GALT3) (Pongo abelii (Sumatran orangutan)).